The chain runs to 320 residues: Lipoyl synthase (320 aa).

Residues 1-24 (MIGKLVRDLKIPDQRHPEKAHRPD) show a composition bias toward basic and acidic residues. The tract at residues 1 to 30 (MIGKLVRDLKIPDQRHPEKAHRPDNVQPKK) is disordered. Cys-60, Cys-65, Cys-71, Cys-86, Cys-90, Cys-93, and Ser-300 together coordinate [4Fe-4S] cluster. Residues 72-289 (WSQGHATMMI…EKAAYGKGFL (218 aa)) enclose the Radical SAM core domain.

This sequence belongs to the radical SAM superfamily. Lipoyl synthase family. The cofactor is [4Fe-4S] cluster.

The protein localises to the cytoplasm. It catalyses the reaction [[Fe-S] cluster scaffold protein carrying a second [4Fe-4S](2+) cluster] + N(6)-octanoyl-L-lysyl-[protein] + 2 oxidized [2Fe-2S]-[ferredoxin] + 2 S-adenosyl-L-methionine + 4 H(+) = [[Fe-S] cluster scaffold protein] + N(6)-[(R)-dihydrolipoyl]-L-lysyl-[protein] + 4 Fe(3+) + 2 hydrogen sulfide + 2 5'-deoxyadenosine + 2 L-methionine + 2 reduced [2Fe-2S]-[ferredoxin]. The protein operates within protein modification; protein lipoylation via endogenous pathway; protein N(6)-(lipoyl)lysine from octanoyl-[acyl-carrier-protein]: step 2/2. Functionally, catalyzes the radical-mediated insertion of two sulfur atoms into the C-6 and C-8 positions of the octanoyl moiety bound to the lipoyl domains of lipoate-dependent enzymes, thereby converting the octanoylated domains into lipoylated derivatives. This is Lipoyl synthase from Cereibacter sphaeroides (strain ATCC 17029 / ATH 2.4.9) (Rhodobacter sphaeroides).